Reading from the N-terminus, the 71-residue chain is BBSome-interacting protein 1 (71 aa).

It belongs to the BBIP10 family.

It is found in the cell projection. The protein resides in the cilium. It localises to the cytoplasm. Functionally, required for primary cilia assembly. This is BBSome-interacting protein 1 (bbip1) from Nematostella vectensis (Starlet sea anemone).